The sequence spans 655 residues: Acetyl-coenzyme A synthetase (655 aa).

Residues Arg196–Lys199 and Thr316 contribute to the CoA site. ATP is bound by residues Gly392–Pro394, Asp416–Thr421, Asp507, and Arg522. Residue Ser530 participates in CoA binding. Arg533 contacts ATP. Mg(2+)-binding residues include Val544 and Val549. Residue Lys619 is modified to N6-acetyllysine.

It belongs to the ATP-dependent AMP-binding enzyme family. The cofactor is Mg(2+). In terms of processing, acetylated. Deacetylation by the SIR2-homolog deacetylase activates the enzyme.

It catalyses the reaction acetate + ATP + CoA = acetyl-CoA + AMP + diphosphate. Functionally, catalyzes the conversion of acetate into acetyl-CoA (AcCoA), an essential intermediate at the junction of anabolic and catabolic pathways. AcsA undergoes a two-step reaction. In the first half reaction, AcsA combines acetate with ATP to form acetyl-adenylate (AcAMP) intermediate. In the second half reaction, it can then transfer the acetyl group from AcAMP to the sulfhydryl group of CoA, forming the product AcCoA. The chain is Acetyl-coenzyme A synthetase from Thiobacillus denitrificans (strain ATCC 25259 / T1).